A 374-amino-acid chain; its full sequence is Queuine tRNA-ribosyltransferase (374 aa).

The Proton acceptor role is filled by Asp-92. Residues 92–96, Asp-146, Gln-193, and Gly-220 each bind substrate; that span reads DSGGY. Residues 251-257 form an RNA binding region; the sequence is GVGKPDD. Asp-270 serves as the catalytic Nucleophile. Residues 275 to 279 form an RNA binding; important for wobble base 34 recognition region; the sequence is TRSGR. Cys-308, Cys-310, Cys-313, and His-339 together coordinate Zn(2+).

It belongs to the queuine tRNA-ribosyltransferase family. In terms of assembly, homodimer. Within each dimer, one monomer is responsible for RNA recognition and catalysis, while the other monomer binds to the replacement base PreQ1. It depends on Zn(2+) as a cofactor.

It carries out the reaction 7-aminomethyl-7-carbaguanine + guanosine(34) in tRNA = 7-aminomethyl-7-carbaguanosine(34) in tRNA + guanine. The protein operates within tRNA modification; tRNA-queuosine biosynthesis. Catalyzes the base-exchange of a guanine (G) residue with the queuine precursor 7-aminomethyl-7-deazaguanine (PreQ1) at position 34 (anticodon wobble position) in tRNAs with GU(N) anticodons (tRNA-Asp, -Asn, -His and -Tyr). Catalysis occurs through a double-displacement mechanism. The nucleophile active site attacks the C1' of nucleotide 34 to detach the guanine base from the RNA, forming a covalent enzyme-RNA intermediate. The proton acceptor active site deprotonates the incoming PreQ1, allowing a nucleophilic attack on the C1' of the ribose to form the product. After dissociation, two additional enzymatic reactions on the tRNA convert PreQ1 to queuine (Q), resulting in the hypermodified nucleoside queuosine (7-(((4,5-cis-dihydroxy-2-cyclopenten-1-yl)amino)methyl)-7-deazaguanosine). In Novosphingobium aromaticivorans (strain ATCC 700278 / DSM 12444 / CCUG 56034 / CIP 105152 / NBRC 16084 / F199), this protein is Queuine tRNA-ribosyltransferase.